The following is an 874-amino-acid chain: Eukaryotic translation initiation factor 3 subunit C (874 aa).

The tract at residues 1 to 70 is disordered; that stretch reads MSRFFVSGYT…DGRPSGPAYF (70 aa). The span at 14-61 shows a compositional bias: acidic residues; it reads SSEEEDLLSTSEEELLSSSDEGEDNESDSSFFGEDDDESEESSSDDED. The region spanning 598 to 774 is the PCI domain; that stretch reads FHQHINLELL…KFISFTSTTE (177 aa). The tract at residues 797–874 is disordered; it reads KNEKTQSNGY…SNNDEFQATA (78 aa). The segment covering 813–848 has biased composition (low complexity); that stretch reads KDQQNQQQQNQNQNQQQQQNQQQQQQQQSSQQQSNN. Positions 862 to 874 are enriched in polar residues; that stretch reads NVNSNNDEFQATA.

This sequence belongs to the eIF-3 subunit C family. In terms of assembly, component of the eukaryotic translation initiation factor 3 (eIF-3) complex.

It localises to the cytoplasm. In terms of biological role, component of the eukaryotic translation initiation factor 3 (eIF-3) complex, which is involved in protein synthesis of a specialized repertoire of mRNAs and, together with other initiation factors, stimulates binding of mRNA and methionyl-tRNAi to the 40S ribosome. The eIF-3 complex specifically targets and initiates translation of a subset of mRNAs involved in cell proliferation. This is Eukaryotic translation initiation factor 3 subunit C from Candida albicans (strain SC5314 / ATCC MYA-2876) (Yeast).